A 323-amino-acid polypeptide reads, in one-letter code: GILT-like protein C02D5.2 (323 aa).

Residues 13 to 32 form a helical membrane-spanning segment; that stretch reads LICRPILTFSSLHILTAFLI. Asn35 carries an N-linked (GlcNAc...) asparagine glycan. Helical transmembrane passes span 37-59 and 87-104; these read SYINWSVTIILLILGLYACHRFL and YIYGTIFILSIFLLYRSL. N-linked (GlcNAc...) asparagine glycosylation occurs at Asn289.

This sequence belongs to the GILT family.

The protein resides in the membrane. The protein is GILT-like protein C02D5.2 of Caenorhabditis elegans.